Reading from the N-terminus, the 122-residue chain is Small ribosomal subunit protein uS12c (122 aa).

Belongs to the universal ribosomal protein uS12 family. As to quaternary structure, part of the 30S ribosomal subunit.

Its subcellular location is the plastid. The protein localises to the chloroplast. Functionally, with S4 and S5 plays an important role in translational accuracy. Located at the interface of the 30S and 50S subunits. The sequence is that of Small ribosomal subunit protein uS12c (rps12) from Illicium oligandrum (Star anise).